Here is a 402-residue protein sequence, read N- to C-terminus: Zinc finger CCHC domain-containing protein 12 (402 aa).

Residues 308–341 form a disordered region; sequence IDSPHNSRAQFPSTSGGSGYKNNGPGEMRRARKR. A compositionally biased stretch (polar residues) spans 311-322; that stretch reads PHNSRAQFPSTS. The CCHC-type zinc-finger motif lies at 345–362; the sequence is IRCSYCGEEGHSKETCDN.

Belongs to the ZCCHC12 family. In terms of assembly, interacts with SMAD1 and CREB-binding protein (CBP). Forms a protein-DNA complex through its association with SMAD1.

In terms of biological role, transcriptional coactivator in the bone morphogenetic protein (BMP)-signaling pathway. It positively modulates BMP signaling by interacting with SMAD1 and associating with CBP in the transcription complex. It contributes to the BMP-induced enhancement of cholinergic-neuron-specific gene expression. The protein is Zinc finger CCHC domain-containing protein 12 (ZCCHC12) of Homo sapiens (Human).